The chain runs to 278 residues: Sulfur carrier protein FdhD (278 aa).

C120 acts as the Cysteine persulfide intermediate in catalysis.

The protein belongs to the FdhD family.

The protein localises to the cytoplasm. Required for formate dehydrogenase (FDH) activity. Acts as a sulfur carrier protein that transfers sulfur from IscS to the molybdenum cofactor prior to its insertion into FDH. The sequence is that of Sulfur carrier protein FdhD from Bordetella petrii (strain ATCC BAA-461 / DSM 12804 / CCUG 43448).